The following is a 487-amino-acid chain: GTPase Der (487 aa).

2 consecutive EngA-type G domains span residues 3-166 and 201-374; these read PVIA…IAEL and VKLA…ESAT. GTP is bound by residues 9-16, 56-60, 118-121, 207-214, 254-258, and 319-322; these read GRPNVGKS, DTGGI, NKTD, DTAGV, and NKWD. The KH-like domain occupies 375–459; sequence KRISTAMLRR…PIKIEFREGD (85 aa).

It belongs to the TRAFAC class TrmE-Era-EngA-EngB-Septin-like GTPase superfamily. EngA (Der) GTPase family. As to quaternary structure, associates with the 50S ribosomal subunit.

Functionally, GTPase that plays an essential role in the late steps of ribosome biogenesis. In Pseudoalteromonas translucida (strain TAC 125), this protein is GTPase Der.